The chain runs to 235 residues: BPI fold-containing family A member 2 (235 aa).

The first 20 residues, 1-20 (MFQLGSLVVLCGLLIGNSES), serve as a signal peptide directing secretion. A disulfide bridge connects residues cysteine 161 and cysteine 204.

It belongs to the BPI/LBP/Plunc superfamily. Plunc family. In terms of tissue distribution, predominates in the parotid glands, present in smaller amounts (1/10) in the submaxillary glands and in the sublingual glands, and at lower amount in the pancreas but undetectable in the liver. Found also in lacrimal gland.

It localises to the secreted. Its function is as follows. Has strong antibacterial activity against P.aeruginosa. This is BPI fold-containing family A member 2 (Bpifa2) from Mus musculus (Mouse).